Reading from the N-terminus, the 203-residue chain is MFHNTFQSGLLSVLYSIGSKPLQIWDTQIKNGHVKRITDEEIQSLVLEIMGNNISTAFISCPVDPDKTLGIKLPFFVMVVKNMNKYFSFEVQIIDDKKIKRRFRASNYQSATRVKPFICTMPMRMDEGWNQIQFNLSDFVKRAYGTNYVETLRIQIHANCRIRRVYFADRLYTEDELPAEFKLYLPIRGQLSTQSPAFAMTSE.

Belongs to the CFAP20 family.

The protein localises to the nucleus. Its subcellular location is the cytoplasm. It is found in the cytoskeleton. It localises to the microtubule organizing center. The protein resides in the centrosome. The protein localises to the centriole. Its subcellular location is the cilium basal body. It is found in the cilium axoneme. Cilium- and flagellum-specific protein that plays a role in axonemal structure organization and motility. Microtubule inner protein (MIP) part of the dynein-decorated doublet microtubules (DMTs) in cilia axoneme, which is required for motile cilia beating. Involved in the regulation of the size and morphology of cilia. Required for axonemal microtubules polyglutamylation. The sequence is that of Cilia- and flagella-associated protein 20 from Caenorhabditis elegans.